We begin with the raw amino-acid sequence, 177 residues long: Large ribosomal subunit protein uL6 (177 aa).

This sequence belongs to the universal ribosomal protein uL6 family. In terms of assembly, part of the 50S ribosomal subunit.

This protein binds to the 23S rRNA, and is important in its secondary structure. It is located near the subunit interface in the base of the L7/L12 stalk, and near the tRNA binding site of the peptidyltransferase center. This is Large ribosomal subunit protein uL6 from Hahella chejuensis (strain KCTC 2396).